The primary structure comprises 526 residues: Glucomannan 4-beta-mannosyltransferase 1 (526 aa).

The helical transmembrane segment at 31-51 (VIIPLLKLAVIVCSVMSIMLF) threads the bilayer. Residue D130 is part of the active site. Substrate is bound by residues D189 and D191. Residue D283 is part of the active site. The next 4 helical transmembrane spans lie at 362–382 (IVAH…CVIV), 399–419 (ITIL…LWIL), 477–497 (PLEI…LLFG), and 501–521 (FFVY…GLVG).

The protein belongs to the glycosyltransferase 2 family. Plant cellulose synthase-like A subfamily.

Its subcellular location is the golgi apparatus membrane. It catalyses the reaction GDP-mannose + (glucomannan)n = GDP + (glucomannan)n+1.. In terms of biological role, possesses 4-beta-mannosyltransferase activity on mannan using GDP-mannose. The beta-1,4-mannan product is the backbone for galactomannan synthesis by galactomannan galactosyltransferase. The galactomannan is a hemicellulosic storage polysaccharide accumulated in the form of secondary wall thickenings in the seed endosperm. This is Glucomannan 4-beta-mannosyltransferase 1 from Cyamopsis tetragonoloba (Guar).